The chain runs to 225 residues: Methylthioribulose-1-phosphate dehydratase (225 aa).

Residues histidine 106 and histidine 108 each contribute to the Zn(2+) site.

The protein belongs to the aldolase class II family. MtnB subfamily. The cofactor is Zn(2+).

The enzyme catalyses 5-(methylsulfanyl)-D-ribulose 1-phosphate = 5-methylsulfanyl-2,3-dioxopentyl phosphate + H2O. Its pathway is amino-acid biosynthesis; L-methionine biosynthesis via salvage pathway; L-methionine from S-methyl-5-thio-alpha-D-ribose 1-phosphate: step 2/6. Catalyzes the dehydration of methylthioribulose-1-phosphate (MTRu-1-P) into 2,3-diketo-5-methylthiopentyl-1-phosphate (DK-MTP-1-P). This Xanthomonas oryzae pv. oryzae (strain MAFF 311018) protein is Methylthioribulose-1-phosphate dehydratase.